We begin with the raw amino-acid sequence, 811 residues long: Phenylalanine--tRNA ligase beta subunit (811 aa).

The 113-residue stretch at 39–151 (RTWAAGVVVG…AGLQAGQPVG (113 aa)) folds into the tRNA-binding domain. The B5 domain maps to 409–495 (EPEHSITLRL…RLYGYDNFGE (87 aa)). Residues Asp473, Asp479, Glu482, and Glu483 each coordinate Mg(2+). Positions 717 to 810 (SSFPASDRDL…LVERFRVTLR (94 aa)) constitute an FDX-ACB domain.

The protein belongs to the phenylalanyl-tRNA synthetase beta subunit family. Type 1 subfamily. Tetramer of two alpha and two beta subunits. Requires Mg(2+) as cofactor.

The protein localises to the cytoplasm. The enzyme catalyses tRNA(Phe) + L-phenylalanine + ATP = L-phenylalanyl-tRNA(Phe) + AMP + diphosphate + H(+). The sequence is that of Phenylalanine--tRNA ligase beta subunit from Synechococcus sp. (strain ATCC 27144 / PCC 6301 / SAUG 1402/1) (Anacystis nidulans).